The chain runs to 759 residues: Spindle pole body component alp16 (759 aa).

Interacts with gamma-tubulin.

It is found in the cytoplasm. Its subcellular location is the cytoskeleton. The protein localises to the microtubule organizing center. It localises to the spindle pole body. In terms of biological role, component of the gamma tubule complex that is required for the regulation of both interphase microtubules and mitotic bipolar spindles. The protein is Spindle pole body component alp16 (alp16) of Schizosaccharomyces pombe (strain 972 / ATCC 24843) (Fission yeast).